Consider the following 246-residue polypeptide: uncharacterized protein (246 aa).

This sequence to M.jannaschii MJ1676.

This is an uncharacterized protein from Methanothermobacter thermautotrophicus (strain ATCC 29096 / DSM 1053 / JCM 10044 / NBRC 100330 / Delta H) (Methanobacterium thermoautotrophicum).